The sequence spans 383 residues: Chorismate synthase (383 aa).

Residues arginine 39 and arginine 45 each contribute to the NADP(+) site. Residues 128 to 130 (RAS), glycine 291, 306 to 310 (KPIAT), and arginine 332 each bind FMN.

Belongs to the chorismate synthase family. In terms of assembly, homotetramer. Requires FMNH2 as cofactor.

It carries out the reaction 5-O-(1-carboxyvinyl)-3-phosphoshikimate = chorismate + phosphate. It functions in the pathway metabolic intermediate biosynthesis; chorismate biosynthesis; chorismate from D-erythrose 4-phosphate and phosphoenolpyruvate: step 7/7. In terms of biological role, catalyzes the anti-1,4-elimination of the C-3 phosphate and the C-6 proR hydrogen from 5-enolpyruvylshikimate-3-phosphate (EPSP) to yield chorismate, which is the branch point compound that serves as the starting substrate for the three terminal pathways of aromatic amino acid biosynthesis. This reaction introduces a second double bond into the aromatic ring system. The polypeptide is Chorismate synthase (Thermus thermophilus (strain ATCC 27634 / DSM 579 / HB8)).